A 500-amino-acid chain; its full sequence is Galactofuranose transporter ATP-binding protein YtfR (500 aa).

ABC transporter domains follow at residues 10–245 (LRTE…LGRE) and 259–497 (LSDK…IMNA). 42 to 49 (GENGAGKS) contributes to the ATP binding site.

Belongs to the ABC transporter superfamily. The complex is composed of two ATP-binding proteins (YtfR), two transmembrane proteins (YtfT and YjfF) and a solute-binding protein (YtfQ).

Its subcellular location is the cell inner membrane. It carries out the reaction D-galactofuranose(out) + ATP + H2O = D-galactofuranose(in) + ADP + phosphate + H(+). Its function is as follows. Part of the ABC transporter complex YtfQRT-YjfF involved in galactofuranose transport. Responsible for energy coupling to the transport system. The polypeptide is Galactofuranose transporter ATP-binding protein YtfR (ytfR) (Escherichia coli (strain K12)).